We begin with the raw amino-acid sequence, 404 residues long: Druantia protein DruA (404 aa).

It is found in the cytoplasm. Component of antiviral defense system Druantia type I, composed of DruA, DruB, DruC, DruD and DruE. Expression of Druantia in E.coli (strain MG1655) confers resistance to phage lambda, SECphi18, SECphi27 and T4. The sequence is that of Druantia protein DruA from Escherichia coli (strain UMEA 4076-1).